A 616-amino-acid polypeptide reads, in one-letter code: Dihydroxy-acid dehydratase (616 aa).

Position 81 (aspartate 81) interacts with Mg(2+). A [2Fe-2S] cluster-binding site is contributed by cysteine 122. Residues aspartate 123 and lysine 124 each contribute to the Mg(2+) site. Lysine 124 carries the post-translational modification N6-carboxylysine. Residue cysteine 195 coordinates [2Fe-2S] cluster. Position 491 (glutamate 491) interacts with Mg(2+). Serine 517 (proton acceptor) is an active-site residue.

It belongs to the IlvD/Edd family. Homodimer. [2Fe-2S] cluster is required as a cofactor. It depends on Mg(2+) as a cofactor.

The catalysed reaction is (2R)-2,3-dihydroxy-3-methylbutanoate = 3-methyl-2-oxobutanoate + H2O. The enzyme catalyses (2R,3R)-2,3-dihydroxy-3-methylpentanoate = (S)-3-methyl-2-oxopentanoate + H2O. It participates in amino-acid biosynthesis; L-isoleucine biosynthesis; L-isoleucine from 2-oxobutanoate: step 3/4. It functions in the pathway amino-acid biosynthesis; L-valine biosynthesis; L-valine from pyruvate: step 3/4. Functions in the biosynthesis of branched-chain amino acids. Catalyzes the dehydration of (2R,3R)-2,3-dihydroxy-3-methylpentanoate (2,3-dihydroxy-3-methylvalerate) into 2-oxo-3-methylpentanoate (2-oxo-3-methylvalerate) and of (2R)-2,3-dihydroxy-3-methylbutanoate (2,3-dihydroxyisovalerate) into 2-oxo-3-methylbutanoate (2-oxoisovalerate), the penultimate precursor to L-isoleucine and L-valine, respectively. This Salmonella dublin (strain CT_02021853) protein is Dihydroxy-acid dehydratase.